The sequence spans 444 residues: Signal recognition particle 54 kDa protein (444 aa).

GTP contacts are provided by residues 102–109, 184–188, and 244–247; these read GVQGSGKT, DTAGR, and SKMD.

This sequence belongs to the GTP-binding SRP family. SRP54 subfamily. Part of the signal recognition particle protein translocation system, which is composed of SRP and FtsY. Archaeal SRP consists of a 7S RNA molecule of 300 nucleotides and two protein subunits: SRP54 and SRP19.

The protein localises to the cytoplasm. The enzyme catalyses GTP + H2O = GDP + phosphate + H(+). In terms of biological role, involved in targeting and insertion of nascent membrane proteins into the cytoplasmic membrane. Binds to the hydrophobic signal sequence of the ribosome-nascent chain (RNC) as it emerges from the ribosomes. The SRP-RNC complex is then targeted to the cytoplasmic membrane where it interacts with the SRP receptor FtsY. This Sulfolobus acidocaldarius (strain ATCC 33909 / DSM 639 / JCM 8929 / NBRC 15157 / NCIMB 11770) protein is Signal recognition particle 54 kDa protein.